We begin with the raw amino-acid sequence, 786 residues long: uncharacterized protein (786 aa).

361 to 362 provides a ligand contact to substrate; sequence WD. Residue E488 is the Proton donor of the active site. 590–591 lines the substrate pocket; it reads KQ. Positions 762 to 786 are disordered; it reads TRKPLLPPPPQPPGREPVHRRALAR. Positions 766–776 are enriched in pro residues; the sequence is LLPPPPQPPGR.

Belongs to the glycosyl hydrolase 65 family.

This is an uncharacterized protein from Mycobacterium tuberculosis (strain CDC 1551 / Oshkosh).